The chain runs to 777 residues: MEQRSSPARSLPPRKTTTTPQLSCELCRKRKVKCDKLTPCTNCAASGTVCVPIYRTRLPRGRHATRPRRVSSPPPTSAPGETDRIIQPSVPVNEDLQERIYRLEALIQGMNSHSHTRTPSATSREQSVQLSDTSTFQTAPNPNTSPILNSSIVSKRLMLQRPDQFWADLVDEIHGLREVVESSLAGGQEGPIPSSDSAKSEPPNDDGIQVLGLGASNPSAALRSMSPLHNPVVARQLCEVYLQQVDPVIKILHRPSLNRWMVQGEPYLSYADGHPAVEALGSAVCYSAISSMTDNQCSVMFHANKADLLAEARVACETAIGRAGLLTTRDITVLQAFVLYLVARRSEDRTPAVWTLIALAVRIGKGLGLYLDPETETFFDQQIRRRLWFTICLMDLQASFGQASEPLISVDESASTALPQHINDSDFDPTTAAHSDPNREGLTDTTFALVTYHAQRTGRLLNFVQHDRKVDGGIPTPTSSTSGTSTSRSRTCDPSWPQQQARHFEQEALRLLHFCDPGTSAYAWFTWHGTQSLIATVRLAAARPLQWHGQAPPPRREGNTELLRLCLPVLEKAQLMHTDPRAEGFRWYVTIPWYALAMALAECYVSSDTALVRYAWPLVESSYLQYEATLGQSLGGPFGQLMRRMKEKLAAPAALPPSSLPSTNWSPATPPTFPGVPRPQSSHDDRHAPGCSWPVPTGSTPPADLGVPSLLPVSTWEALSPPSLDNPSLFGVPPTTTAVADGMDPGADIMWEELFSGIPFNEIAGPDTFFFDMNWGS.

The segment at 1–20 (MEQRSSPARSLPPRKTTTTP) is disordered. The zn(2)-C6 fungal-type DNA-binding region spans 24 to 50 (CELCRKRKVKCDKLTPCTNCAASGTVC). 6 disordered regions span residues 61-85 (GRHA…TDRI), 111-144 (NSHS…NPNT), 182-213 (SSLA…VLGL), 419-440 (PQHI…PNRE), 468-496 (RKVD…DPSW), and 655-699 (LPPS…PTGS). The segment covering 475 to 489 (PTPTSSTSGTSTSRS) has biased composition (low complexity). The span at 668–677 (ATPPTFPGVP) shows a compositional bias: pro residues.

The protein resides in the nucleus. Transcription factor that specifically regulates the expression of the ada gene cluster involved in the biosynthesis of the linear tetracyclic TAN-1612 neuropeptide Y receptor antagonist. This is C6 finger domain transcription factor adaR from Aspergillus niger (strain ATCC MYA-4892 / CBS 513.88 / FGSC A1513).